The following is a 241-amino-acid chain: MNKDCIFAAPIEKLGDFTFDENVAEVFPDMIQRSVPGYSNIITAIGMFAERFVTANSLVYDLGCSRGAATLSARRHITQPNVKIIGVDNSLPMVERCRQHINAYQSDIPVEILCDDIRNIKIENASMVILNFTLQFVPQQDRQLLLEKIYQGLNPNGGLVLSEKFRFENKKMDDLLIDFHHQFKRANGYSELEVSQKRTALENVMRTDSIETHKERLKSAGFSQIELWFQCFNFGSMVAIK.

Residues Tyr38, Gly63–Ser65, Asp88–Asn89, Asp116–Ile117, Asn131, and Arg198 each bind S-adenosyl-L-methionine.

This sequence belongs to the class I-like SAM-binding methyltransferase superfamily. Cx-SAM synthase family. As to quaternary structure, homodimer.

It catalyses the reaction prephenate + S-adenosyl-L-methionine = carboxy-S-adenosyl-L-methionine + 3-phenylpyruvate + H2O. Catalyzes the conversion of S-adenosyl-L-methionine (SAM) to carboxy-S-adenosyl-L-methionine (Cx-SAM). This is Carboxy-S-adenosyl-L-methionine synthase from Histophilus somni (strain 129Pt) (Haemophilus somnus).